Consider the following 383-residue polypeptide: Glucose-1-phosphate adenylyltransferase (383 aa).

Residues Tyr-99, Gly-164, 179–180 (EK), and Ser-190 each bind alpha-D-glucose 1-phosphate.

This sequence belongs to the bacterial/plant glucose-1-phosphate adenylyltransferase family. In terms of assembly, homotetramer.

It carries out the reaction alpha-D-glucose 1-phosphate + ATP + H(+) = ADP-alpha-D-glucose + diphosphate. Its pathway is glycan biosynthesis; glycogen biosynthesis. Its function is as follows. Involved in the biosynthesis of ADP-glucose, a building block required for the elongation reactions to produce glycogen. Catalyzes the reaction between ATP and alpha-D-glucose 1-phosphate (G1P) to produce pyrophosphate and ADP-Glc. In Halalkalibacterium halodurans (strain ATCC BAA-125 / DSM 18197 / FERM 7344 / JCM 9153 / C-125) (Bacillus halodurans), this protein is Glucose-1-phosphate adenylyltransferase.